The primary structure comprises 800 residues: Leukocyte receptor cluster member 8 homolog (800 aa).

Disordered regions lie at residues 118 to 149 (NYQS…MSYS), 175 to 229 (PCIQ…GFKF), 245 to 273 (SSEH…PQQQ), 335 to 394 (TIDW…GRGS), and 407 to 519 (KESS…HGHG). 2 stretches are compositionally biased toward low complexity: residues 120–131 (QSMSSQSGQHQG) and 184–201 (NQSN…SQQS). Positions 252–261 (SAGQQQQQAT) are enriched in polar residues. Residues 338-352 (WSREPLPGKDGGKES) are compositionally biased toward basic and acidic residues. Over residues 360–387 (QTTLQTSHGSTITITQSPRGGGNSTNAA) the composition is skewed to polar residues. The segment covering 409 to 418 (SSSSSSAGSR) has biased composition (low complexity). Basic residues-rich tracts occupy residues 419–433 (SRSR…RRYR) and 508–519 (EKRAARFQHGHG). The 165-residue stretch at 636–800 (DHEEFNQCQA…KLSLAVLPNI (165 aa)) folds into the PCI domain.

This is Leukocyte receptor cluster member 8 homolog (leng8) from Xenopus laevis (African clawed frog).